A 699-amino-acid chain; its full sequence is Elongation factor G (699 aa).

A tr-type G domain is found at 8-288; it reads EDYRNFGIMA…AVCEYLPSPL (281 aa). Residues 17–24, 86–90, and 140–143 each bind GTP; these read AHIDAGKT, DTPGH, and NKMD.

It belongs to the TRAFAC class translation factor GTPase superfamily. Classic translation factor GTPase family. EF-G/EF-2 subfamily.

Its subcellular location is the cytoplasm. In terms of biological role, catalyzes the GTP-dependent ribosomal translocation step during translation elongation. During this step, the ribosome changes from the pre-translocational (PRE) to the post-translocational (POST) state as the newly formed A-site-bound peptidyl-tRNA and P-site-bound deacylated tRNA move to the P and E sites, respectively. Catalyzes the coordinated movement of the two tRNA molecules, the mRNA and conformational changes in the ribosome. The chain is Elongation factor G from Allorhizobium ampelinum (strain ATCC BAA-846 / DSM 112012 / S4) (Agrobacterium vitis (strain S4)).